Consider the following 245-residue polypeptide: Venom nerve growth factor 1 (245 aa).

The first 18 residues, 1-18 (MSMLCYTLIIAFLIGIWA), serve as a signal peptide directing secretion. Positions 19-125 (APKSEDNVPL…ALNRNIRAKR (107 aa)) are excised as a propeptide. Residues 47 to 66 (GLKTSRNTDQRHPAPKKAED) show a composition bias toward basic and acidic residues. Residues 47–69 (GLKTSRNTDQRHPAPKKAEDQEL) are disordered. Cystine bridges form between C139–C206, C182–C234, and C194–C236. N-linked (GlcNAc...) asparagine glycans are attached at residues N148 and N151.

It belongs to the NGF-beta family. In terms of assembly, homodimer; non-covalently linked. Expressed by the venom gland.

It is found in the secreted. Functionally, nerve growth factor is important for the development and maintenance of the sympathetic and sensory nervous systems. It stimulates division and differentiation of sympathetic and embryonic sensory neurons as well as basal forebrain cholinergic neurons in the brain. Its relevance in the snake venom is not clear. However, it has been shown to inhibit metalloproteinase-dependent proteolysis of platelet glycoprotein Ib alpha, suggesting a metalloproteinase inhibition to prevent metalloprotease autodigestion and/or protection against prey proteases. Binds a lipid between the two protein chains in the homodimer. The lipid-bound form promotes histamine relase from mouse mast cells, contrary to the lipid-free form. The protein is Venom nerve growth factor 1 of Tropidechis carinatus (Australian rough-scaled snake).